Here is an 848-residue protein sequence, read N- to C-terminus: Protein NETWORKED 2C (848 aa).

The NAB domain maps to Y10–L90. The interval F108 to P141 is disordered. Coiled coils occupy residues L172–N204, E241–Q278, S305–N454, and A752–F797.

The protein belongs to the NET family.

In terms of biological role, plant-specific actin binding protein. May be part of a membrane-cytoskeletal adapter complex. The protein is Protein NETWORKED 2C of Arabidopsis thaliana (Mouse-ear cress).